A 338-amino-acid chain; its full sequence is Ketol-acid reductoisomerase (NADP(+)) (338 aa).

The region spanning 1 to 181 (MKVYYDKDCN…GGGRSGIIET (181 aa)) is the KARI N-terminal Rossmann domain. NADP(+) is bound by residues 24–27 (YGSQ), Arg-47, Ser-50, Ser-52, and 82–85 (DETQ). His-107 is an active-site residue. Gly-133 serves as a coordination point for NADP(+). Residues 182-327 (NFREETETDL…ARLRAMMPWI (146 aa)) enclose the KARI C-terminal knotted domain. Asp-190, Glu-194, Glu-226, and Glu-230 together coordinate Mg(2+). Ser-251 is a substrate binding site.

Belongs to the ketol-acid reductoisomerase family. It depends on Mg(2+) as a cofactor.

The enzyme catalyses (2R)-2,3-dihydroxy-3-methylbutanoate + NADP(+) = (2S)-2-acetolactate + NADPH + H(+). The catalysed reaction is (2R,3R)-2,3-dihydroxy-3-methylpentanoate + NADP(+) = (S)-2-ethyl-2-hydroxy-3-oxobutanoate + NADPH + H(+). Its pathway is amino-acid biosynthesis; L-isoleucine biosynthesis; L-isoleucine from 2-oxobutanoate: step 2/4. It functions in the pathway amino-acid biosynthesis; L-valine biosynthesis; L-valine from pyruvate: step 2/4. Functionally, involved in the biosynthesis of branched-chain amino acids (BCAA). Catalyzes an alkyl-migration followed by a ketol-acid reduction of (S)-2-acetolactate (S2AL) to yield (R)-2,3-dihydroxy-isovalerate. In the isomerase reaction, S2AL is rearranged via a Mg-dependent methyl migration to produce 3-hydroxy-3-methyl-2-ketobutyrate (HMKB). In the reductase reaction, this 2-ketoacid undergoes a metal-dependent reduction by NADPH to yield (R)-2,3-dihydroxy-isovalerate. This Pelobacter propionicus (strain DSM 2379 / NBRC 103807 / OttBd1) protein is Ketol-acid reductoisomerase (NADP(+)).